We begin with the raw amino-acid sequence, 265 residues long: Glutamate racemase (265 aa).

Substrate is bound by residues 10–11 (DS) and 42–43 (YG). Cysteine 73 serves as the catalytic Proton donor/acceptor. Substrate is bound at residue 74 to 75 (NT). The Proton donor/acceptor role is filled by cysteine 180. 181 to 182 (TH) contributes to the substrate binding site.

This sequence belongs to the aspartate/glutamate racemases family.

It catalyses the reaction L-glutamate = D-glutamate. It functions in the pathway cell wall biogenesis; peptidoglycan biosynthesis. In terms of biological role, provides the (R)-glutamate required for cell wall biosynthesis. The sequence is that of Glutamate racemase from Synechococcus sp. (strain CC9605).